The following is a 569-amino-acid chain: Sugar transporter STL1 (569 aa).

Topologically, residues 1–29 (MKDLKLSNFKGKFISRTSHWGLTGKKLRY) are cytoplasmic. A helical transmembrane segment spans residues 30 to 50 (FITIASMTGFSLFGYDQGLMA). The Extracellular segment spans residues 51–79 (SLITGKQFNYEFPATKENGDHDRHATVVQ). Residues 80 to 100 (GATTSCYELGCFAGSLFVMFC) form a helical membrane-spanning segment. Topologically, residues 101-107 (GERIGRK) are cytoplasmic. Residues 108 to 128 (PLILMGSVITIIGAVISTCAF) traverse the membrane as a helical segment. Residue arginine 129 is a topological domain, extracellular. A helical membrane pass occupies residues 130–150 (GYWALGQFIIGRVVTGVGTGL). Over 151–168 (NTSTIPVWQSEMSKAENR) the chain is Cytoplasmic. The helical transmembrane segment at 169-189 (GLLVNLEGSTIAFGTMIAYWI) threads the bilayer. Over 190 to 203 (DFGLSYTNSSVQWR) the chain is Extracellular. A glycan (N-linked (GlcNAc...) asparagine) is linked at asparagine 197. A helical transmembrane segment spans residues 204 to 224 (FPVSMQIVFALFLLAFMIKLP). Residues 225-291 (ESPRWLISQS…SRGRSQNLQR (67 aa)) lie on the Cytoplasmic side of the membrane. A helical membrane pass occupies residues 292–312 (ALIAASTQFFQQFTGCNAAIY). The Extracellular segment spans residues 313 to 330 (YSTVLFNKTIKLDYRLSM). A glycan (N-linked (GlcNAc...) asparagine) is linked at asparagine 319. The helical transmembrane segment at 331–351 (IIGGVFATIYALSTIGSFFLI) threads the bilayer. At 352–358 (EKLGRRK) the chain is on the cytoplasmic side. A helical membrane pass occupies residues 359–379 (LFLLGATGQAVSFTITFACLV). The Extracellular portion of the chain corresponds to 380-389 (KENKENARGA). Residues 390 to 410 (AVGLFLFITFFGLSLLSLPWI) traverse the membrane as a helical segment. Over 411–426 (YPPEIASMKVRASTNA) the chain is Cytoplasmic. A helical transmembrane segment spans residues 427–447 (FSTCTNWLCNFAVVMFTPIFI). At 448 to 453 (GQSGWG) the chain is on the extracellular side. A helical membrane pass occupies residues 454-474 (CYLFFAVMNYLYIPVIFFFYP). Residues 475–569 (ETAGRSLEEI…TVNDKANFEG (95 aa)) lie on the Cytoplasmic side of the membrane. The segment covering 524–533 (DDEMEKEDFG) has biased composition (acidic residues). Positions 524–569 (DDEMEKEDFGEDRVEDTYNQINGDNSSSSSNIKNEDTVNDKANFEG) are disordered. A compositionally biased stretch (basic and acidic residues) spans 556-569 (KNEDTVNDKANFEG).

The protein belongs to the major facilitator superfamily. Sugar transporter (TC 2.A.1.1) family.

It localises to the membrane. The polypeptide is Sugar transporter STL1 (STL1) (Saccharomyces cerevisiae (strain ATCC 204508 / S288c) (Baker's yeast)).